A 59-amino-acid polypeptide reads, in one-letter code: Large ribosomal subunit protein bL32 (59 aa).

A disordered region spans residues 1–59; that stretch reads MAVQQNKKSPSKRGMHRSHDFLTNPPLAVEPTSGEIHLRHHVSPNGYYRGRKVLPAKGE. Residues 49–59 are compositionally biased toward basic residues; that stretch reads RGRKVLPAKGE.

This sequence belongs to the bacterial ribosomal protein bL32 family.

The sequence is that of Large ribosomal subunit protein bL32 from Methylobacillus flagellatus (strain ATCC 51484 / DSM 6875 / VKM B-1610 / KT).